A 213-amino-acid polypeptide reads, in one-letter code: Thymidylate kinase (213 aa).

Position 10–17 (10–17 (GLEGAGKT)) interacts with ATP.

Belongs to the thymidylate kinase family.

It carries out the reaction dTMP + ATP = dTDP + ADP. In terms of biological role, phosphorylation of dTMP to form dTDP in both de novo and salvage pathways of dTTP synthesis. The polypeptide is Thymidylate kinase (Escherichia coli O7:K1 (strain IAI39 / ExPEC)).